The chain runs to 216 residues: Acyl-homoserine-lactone synthase (216 aa).

It belongs to the autoinducer synthase family.

The enzyme catalyses a fatty acyl-[ACP] + S-adenosyl-L-methionine = an N-acyl-L-homoserine lactone + S-methyl-5'-thioadenosine + holo-[ACP] + H(+). Functionally, required for the synthesis of an acyl-HSL autoinducer that binds to YukR and which is involved in the regulation of motility and morphology. This chain is Acyl-homoserine-lactone synthase (yukI), found in Yersinia ruckeri.